Here is a 213-residue protein sequence, read N- to C-terminus: tRNA (guanine-N(7)-)-methyltransferase (213 aa).

4 residues coordinate S-adenosyl-L-methionine: Glu-44, Glu-69, Asn-96, and Asp-118. Residue Asp-118 is part of the active site. Lys-122 contributes to the substrate binding site. Residues 124-129 (RHEKRR) form an interaction with RNA region. Substrate contacts are provided by residues Asp-154 and 191 to 194 (TEYE).

Belongs to the class I-like SAM-binding methyltransferase superfamily. TrmB family.

It catalyses the reaction guanosine(46) in tRNA + S-adenosyl-L-methionine = N(7)-methylguanosine(46) in tRNA + S-adenosyl-L-homocysteine. It functions in the pathway tRNA modification; N(7)-methylguanine-tRNA biosynthesis. Its function is as follows. Catalyzes the formation of N(7)-methylguanine at position 46 (m7G46) in tRNA. This Bacillus licheniformis (strain ATCC 14580 / DSM 13 / JCM 2505 / CCUG 7422 / NBRC 12200 / NCIMB 9375 / NCTC 10341 / NRRL NRS-1264 / Gibson 46) protein is tRNA (guanine-N(7)-)-methyltransferase.